A 473-amino-acid chain; its full sequence is uncharacterized protein (473 aa).

Positions 1-19 (MIRAFLVFPYLYILVQSNG) are cleaved as a signal peptide.

This is an uncharacterized protein from Methanocaldococcus jannaschii (strain ATCC 43067 / DSM 2661 / JAL-1 / JCM 10045 / NBRC 100440) (Methanococcus jannaschii).